A 673-amino-acid chain; its full sequence is Probable potassium transport system protein Kup 1 (673 aa).

Transmembrane regions (helical) follow at residues 14-34, 58-78, 101-121, 147-167, 175-195, 196-216, 220-240, 252-272, 294-314, 345-365, 374-394, 403-423, and 427-447; these read GAGF…SPLY, LSLI…WIAL, WLII…ALTP, LPIV…QRFG, FGPV…INLF, GDFS…LLSP, AGIF…ALYS, VSWP…AAWL, LIIF…QALI, LYIP…VVYF, AYGL…TVYL, VFVV…FAAS, and FLHG…VMAI.

This sequence belongs to the HAK/KUP transporter (TC 2.A.72) family.

It is found in the cell membrane. It carries out the reaction K(+)(in) + H(+)(in) = K(+)(out) + H(+)(out). Functionally, transport of potassium into the cell. Likely operates as a K(+):H(+) symporter. The chain is Probable potassium transport system protein Kup 1 from Lactococcus lactis subsp. cremoris (strain SK11).